A 222-amino-acid polypeptide reads, in one-letter code: Uracil-DNA glycosylase (222 aa).

Catalysis depends on Asp-61, which acts as the Proton acceptor.

The protein belongs to the uracil-DNA glycosylase (UDG) superfamily. UNG family.

Its subcellular location is the cytoplasm. It carries out the reaction Hydrolyzes single-stranded DNA or mismatched double-stranded DNA and polynucleotides, releasing free uracil.. Excises uracil residues from the DNA which can arise as a result of misincorporation of dUMP residues by DNA polymerase or due to deamination of cytosine. In Actinobacillus succinogenes (strain ATCC 55618 / DSM 22257 / CCUG 43843 / 130Z), this protein is Uracil-DNA glycosylase.